Here is a 1175-residue protein sequence, read N- to C-terminus: DNA-directed RNA polymerase subunit beta (1175 aa).

The tract at residues 1–24 (MEGSLLVASSASNNETANNVESTD) is disordered. Positions 7 to 23 (VASSASNNETANNVEST) are enriched in low complexity.

It belongs to the RNA polymerase beta chain family. In terms of assembly, the RNAP catalytic core consists of 2 alpha, 1 beta, 1 beta' and 1 omega subunit. When a sigma factor is associated with the core the holoenzyme is formed, which can initiate transcription.

It catalyses the reaction RNA(n) + a ribonucleoside 5'-triphosphate = RNA(n+1) + diphosphate. Functionally, DNA-dependent RNA polymerase catalyzes the transcription of DNA into RNA using the four ribonucleoside triphosphates as substrates. This is DNA-directed RNA polymerase subunit beta from Renibacterium salmoninarum (strain ATCC 33209 / DSM 20767 / JCM 11484 / NBRC 15589 / NCIMB 2235).